A 76-amino-acid polypeptide reads, in one-letter code: Rhesus theta defensin-1/3 subunit A (76 aa).

The signal sequence occupies residues 1–22 (MRTFALLTAMLLLVALHAQAEA). A propeptide spanning residues 23–64 (RQARADEAAAQQQPGTDDQGMAHSFTWPENAALPLSESAKGL) is cleaved from the precursor. The segment at 25–45 (ARADEAAAQQQPGTDDQGMAH) is disordered. Residue Arg-65 forms a Cyclopeptide (Arg-Cys) (interchain with C-73 in subunit A); in form RTD-3 linkage. Arg-65 is covalently cross-linked (Cyclopeptide (Arg-Cys) (interchain with C-73 in subunit B); in form RTD-1). Cys-68 and Cys-73 are disulfide-bonded. A Cyclopeptide (Cys-Arg) (interchain with R-65 in subunit A); in form RTD-3 cross-link involves residue Cys-73. Cys-73 participates in a covalent cross-link: Cyclopeptide (Cys-Arg) (interchain with R-65 in subunit B); in form RTD-1. A propeptide spanning residues 74 to 76 (RLL) is cleaved from the precursor.

The protein belongs to the alpha-defensin family. Theta subfamily. As to quaternary structure, RTD-1 is a cyclic heterodimer composed of subunits A and B; disulfide-linked. RTD-3 is a cyclic homodimer composed of two subunits A; disulfide-linked. Forms a cyclic peptide with subunit A (RTD-3) or with subunit B (RTD-1). An additional intersubunit disulfide bond is formed. In terms of tissue distribution, RTD-1 is expressed in bone marrow. Detected in promyelocytes, myelocytes and mature neutrophils and monocytes.

RTD-1 and RTD-3 have similar antimicrobial activities against the Gram-positive bacteria S.aureus 502A and L.monocytogenes, the Gram-negative bacteria S.typhimurium and E.coli ML35, and the fungi C.albicans 16820 and C.neoformans 271A. The protein is Rhesus theta defensin-1/3 subunit A (RTD1A) of Macaca mulatta (Rhesus macaque).